Reading from the N-terminus, the 152-residue chain is Transcriptional regulator MraZ (152 aa).

SpoVT-AbrB domains follow at residues Ala5–Glu52 and Ala81–Thr124.

The protein belongs to the MraZ family. In terms of assembly, forms oligomers.

The protein localises to the cytoplasm. The protein resides in the nucleoid. Negatively regulates its own expression and that of the subsequent genes in the proximal part of the division and cell wall (dcw) gene cluster. Acts by binding directly to DNA. May also regulate the expression of genes outside the dcw cluster. The chain is Transcriptional regulator MraZ from Klebsiella pneumoniae (strain 342).